Reading from the N-terminus, the 83-residue chain is Alpha-conotoxin QcIA (83 aa).

The N-terminal stretch at 1 to 21 (MGMRMMFTLFLLAVLSTTVVS) is a signal peptide. Positions 22–48 (FTLDRASNGRDAAADSKAADQIAQTVR) are excised as a propeptide. 2 disulfides stabilise this stretch: C51–C57 and C52–C65. The segment at 53 to 55 (SNP) is ser-Xaa-Pro motif, crucial for potent interaction with nAChR. The propeptide occupies 66 to 83 (RRTLMLQNPLNHDMSPSA).

This sequence belongs to the conotoxin A superfamily. As to expression, expressed by the venom duct.

The protein localises to the secreted. Alpha-conotoxins bind to the nicotinic acetylcholine receptors (nAChR) and inhibit them. A synthetic amidated version of this toxin potently and preferentially antagonizes neuronal rat alpha-3-beta-2 (IC(50)=55.7 nM) and alpha-6/alpha-3-beta-4 (IC(50)=90.69 nM) nAChRs. This is Alpha-conotoxin QcIA from Conus quercinus (Oak cone).